A 109-amino-acid chain; its full sequence is MSAQPVDIQVFGRSLRVNCPPEQQDALNMAAEDLSQRLQDLKVRTRVNNTEQLVFIAALNVCHELAQERLKTRDYASNMEQRIRMLQQTIEQALLEQGRISDRQDTQFE.

Residues 22–99 are a coiled coil; that stretch reads EQQDALNMAA…IEQALLEQGR (78 aa).

Belongs to the ZapA family. Type 1 subfamily. As to quaternary structure, homodimer. Interacts with FtsZ.

The protein localises to the cytoplasm. Activator of cell division through the inhibition of FtsZ GTPase activity, therefore promoting FtsZ assembly into bundles of protofilaments necessary for the formation of the division Z ring. It is recruited early at mid-cell but it is not essential for cell division. This is Cell division protein ZapA from Yersinia pseudotuberculosis serotype O:1b (strain IP 31758).